We begin with the raw amino-acid sequence, 242 residues long: Phosphoribosylaminoimidazole-succinocarboxamide synthase (242 aa).

The protein belongs to the SAICAR synthetase family.

The catalysed reaction is 5-amino-1-(5-phospho-D-ribosyl)imidazole-4-carboxylate + L-aspartate + ATP = (2S)-2-[5-amino-1-(5-phospho-beta-D-ribosyl)imidazole-4-carboxamido]succinate + ADP + phosphate + 2 H(+). It functions in the pathway purine metabolism; IMP biosynthesis via de novo pathway; 5-amino-1-(5-phospho-D-ribosyl)imidazole-4-carboxamide from 5-amino-1-(5-phospho-D-ribosyl)imidazole-4-carboxylate: step 1/2. In Prochlorococcus marinus (strain MIT 9303), this protein is Phosphoribosylaminoimidazole-succinocarboxamide synthase.